The following is a 251-amino-acid chain: Aquaporin (251 aa).

At 1–11 (MAKEALKTLQS) the chain is on the cytoplasmic side. The helical transmembrane segment at 12-32 (MFGEMVASFVFGFAVYSAILG) threads the bilayer. Residues 33 to 42 (SSISQSSADK) are Extracellular-facing. A helical transmembrane segment spans residues 43–63 (VIVGLTVGFSGIGVIYSFCDV). Residues 64–86 (TIAHFNPAITLAAILTSKIDVLQ) lie on the Cytoplasmic side of the membrane. The NPA signature appears at 69-71 (NPA). The chain crosses the membrane as a helical span at residues 87 to 107 (GLGYMLAQYIGFMLAVCALLV). The Extracellular segment spans residues 108-133 (CSPVEYKETLDTIRPGPTDFGATSLN). Residues 134–154 (VFFAEFFLTAIFVHIVFATAV) form a helical membrane-spanning segment. At 155–179 (NPYKPKVDTEGKFVDPDEKEPVDRR) the chain is on the cytoplasmic side. The helical transmembrane segment at 180–200 (ITAPLCIGLTLGFLAFMGLAS) threads the bilayer. Over 201–224 (SGGAFNPGLTFAPMAMSNTWSHFW) the chain is Extracellular. Positions 206 to 208 (NPG) match the NPG motif. The chain crosses the membrane as a helical span at residues 225 to 245 (IYLGGQYLGGLTGGLLQVLVL). Over 246 to 251 (YKLSSD) the chain is Cytoplasmic.

Belongs to the MIP/aquaporin (TC 1.A.8) family.

It localises to the cell membrane. Its function is as follows. Water channel required to facilitate the transport of water across membranes. Involved in osmotolerance. This chain is Aquaporin (AQP), found in Encephalitozoon intestinalis (Microsporidian parasite).